We begin with the raw amino-acid sequence, 306 residues long: Ribosomal protein L11 methyltransferase (306 aa).

Residues threonine 154, glycine 179, aspartate 201, and asparagine 242 each coordinate S-adenosyl-L-methionine.

The protein belongs to the methyltransferase superfamily. PrmA family.

The protein resides in the cytoplasm. It carries out the reaction L-lysyl-[protein] + 3 S-adenosyl-L-methionine = N(6),N(6),N(6)-trimethyl-L-lysyl-[protein] + 3 S-adenosyl-L-homocysteine + 3 H(+). Its function is as follows. Methylates ribosomal protein L11. This is Ribosomal protein L11 methyltransferase from Stenotrophomonas maltophilia (strain K279a).